The primary structure comprises 75 residues: Small, acid-soluble spore protein Tlp (75 aa).

The protein belongs to the Tlp family.

The protein localises to the spore core. This Geobacillus thermodenitrificans (strain NG80-2) protein is Small, acid-soluble spore protein Tlp.